A 290-amino-acid chain; its full sequence is PIH1 domain-containing protein 1 (290 aa).

The segment covering 34–50 has biased composition (polar residues); sequence ELQQAQTSRPESTQIQP. The tract at residues 34–53 is disordered; the sequence is ELQQAQTSRPESTQIQPQPG. At S173 the chain carries Phosphoserine.

The protein belongs to the PIH1 family. Component of the R2TP complex composed at least of RUVBL1, RUVBL2, RPAP3 and PIHD1. Component of the PAQosome complex which is responsible for the biogenesis of several protein complexes and which consists of R2TP complex members RUVBL1, RUVBL2, RPAP3 and PIH1D1, URI complex members PFDN2, PFDN6, PDRG1, UXT and URI1 as well as ASDURF, POLR2E and DNAAF10/WDR92. Interacts with phosphorylated TELO2 and mediates interaction of TELO2 with the R2TP complex. Interacts with phosphorylated ECD, EFTUD2/SNRP116, RPB1 and UBR5 and with RPB1 in a phosphorylation-independent manner. Interacts with the core C/D box snoRNP particle components NOP58 and FBL and with RUVBL1/TIP49. Interacts with RPAP3 and DNAAF10. Interacts with histone H4 and with SWI/SNF complex member SMARCB1/SNF5. Interacts with the mTORC1 complex member RPTOR. Interacts with MSL1.

Its subcellular location is the nucleus. Its function is as follows. Involved in the assembly of C/D box small nucleolar ribonucleoprotein (snoRNP) particles. Recruits the SWI/SNF complex to the core promoter of rRNA genes and enhances pre-rRNA transcription. Mediates interaction of TELO2 with the R2TP complex which is necessary for the stability of MTOR and SMG1. Positively regulates the assembly and activity of the mTORC1 complex. In Bos taurus (Bovine), this protein is PIH1 domain-containing protein 1 (PIH1D1).